The primary structure comprises 176 residues: Isopentenyl-diphosphate Delta-isomerase 1 (176 aa).

Mn(2+) contacts are provided by His23 and His30. In terms of domain architecture, Nudix hydrolase spans 28 to 162 (HLHRAFSCFI…EEFCTPWFKK (135 aa)). Residue Cys65 is part of the active site. A Mg(2+)-binding site is contributed by Cys65. His67 is a Mn(2+) binding site. Glu85 lines the Mg(2+) pocket. Residues Glu112 and Glu114 each contribute to the Mn(2+) site. Residue Glu114 is part of the active site.

Belongs to the IPP isomerase type 1 family. Homodimer. The cofactor is Mg(2+). Mn(2+) serves as cofactor.

It is found in the cytoplasm. It carries out the reaction isopentenyl diphosphate = dimethylallyl diphosphate. The protein operates within isoprenoid biosynthesis; dimethylallyl diphosphate biosynthesis; dimethylallyl diphosphate from isopentenyl diphosphate: step 1/1. In terms of biological role, catalyzes the 1,3-allylic rearrangement of the homoallylic substrate isopentenyl (IPP) to its highly electrophilic allylic isomer, dimethylallyl diphosphate (DMAPP). This Photorhabdus laumondii subsp. laumondii (strain DSM 15139 / CIP 105565 / TT01) (Photorhabdus luminescens subsp. laumondii) protein is Isopentenyl-diphosphate Delta-isomerase 1.